Here is an 831-residue protein sequence, read N- to C-terminus: Periplasmic nitrate reductase (831 aa).

The tat-type signal signal peptide spans 1 to 31 (MKLSRRDFMKANAAVAAAAAAGLTIPTVAKA). In terms of domain architecture, 4Fe-4S Mo/W bis-MGD-type spans 40–96 (IKWDKAPCRFCGTGCGVLVGTQNGRIVASQGDPDSPVNRGLNCVKGYFLPKIMYGKD). Residues Cys-47, Cys-50, Cys-54, and Cys-82 each contribute to the [4Fe-4S] cluster site. Residues Lys-84, Gln-151, Asn-176, Cys-180, 213 to 220 (WGSNMAEM), 244 to 248 (STFEH), 263 to 265 (QTD), Met-373, Gln-377, Asn-483, 509 to 510 (SD), Lys-532, Asp-559, and 719 to 728 (TGRVLEHWHT) each bind Mo-bis(molybdopterin guanine dinucleotide). Phe-795 contacts substrate. Mo-bis(molybdopterin guanine dinucleotide) contacts are provided by Asn-803 and Lys-820.

It belongs to the prokaryotic molybdopterin-containing oxidoreductase family. NasA/NapA/NarB subfamily. In terms of assembly, component of the periplasmic nitrate reductase NapAB complex composed of NapA and NapB. Requires [4Fe-4S] cluster as cofactor. Mo-bis(molybdopterin guanine dinucleotide) serves as cofactor. In terms of processing, predicted to be exported by the Tat system. The position of the signal peptide cleavage has not been experimentally proven.

The protein localises to the periplasm. It catalyses the reaction 2 Fe(II)-[cytochrome] + nitrate + 2 H(+) = 2 Fe(III)-[cytochrome] + nitrite + H2O. Catalytic subunit of the periplasmic nitrate reductase complex NapAB. Receives electrons from NapB and catalyzes the reduction of nitrate to nitrite. This is Periplasmic nitrate reductase from Yersinia enterocolitica serotype O:8 / biotype 1B (strain NCTC 13174 / 8081).